We begin with the raw amino-acid sequence, 398 residues long: 2-amino-3-ketobutyrate coenzyme A ligase (398 aa).

Cys111–Phe112 serves as a coordination point for pyridoxal 5'-phosphate. Residue His136 coordinates substrate. Residues Ser185, Asp210–His213, Thr241–Lys244, and Ser274–Asn275 each bind pyridoxal 5'-phosphate. Lys244 is subject to N6-(pyridoxal phosphate)lysine. Arg368 is a binding site for substrate.

This sequence belongs to the class-II pyridoxal-phosphate-dependent aminotransferase family. In terms of assembly, homodimer. Requires pyridoxal 5'-phosphate as cofactor.

It carries out the reaction glycine + acetyl-CoA = (2S)-2-amino-3-oxobutanoate + CoA. The protein operates within amino-acid degradation; L-threonine degradation via oxydo-reductase pathway; glycine from L-threonine: step 2/2. Its function is as follows. Catalyzes the cleavage of 2-amino-3-ketobutyrate to glycine and acetyl-CoA. The polypeptide is 2-amino-3-ketobutyrate coenzyme A ligase (Salmonella typhimurium (strain LT2 / SGSC1412 / ATCC 700720)).